Consider the following 145-residue polypeptide: Androgenic gland hormone (145 aa).

An N-terminal signal peptide occupies residues 1 to 21; that stretch reads MKGLLFIVSLLCLTLHQRVWA. 4 cysteine pairs are disulfide-bonded: Cys-33–Cys-122, Cys-42–Cys-59, Cys-44–Cys-140, and Cys-123–Cys-131. Residues 68-112 constitute a propeptide, c peptide; the sequence is SADDEDYLFEEDEDDEFFHPRALSPPAAKSGDERLEDEVSFHSRS. Residue Asn-132 is glycosylated (N-linked (GlcNAc...) asparagine).

As to expression, androgenic gland.

It localises to the secreted. Controls sex differentiation and the formation of male appendages, spermatogenesis, pigmentation, and male specific behavior. This chain is Androgenic gland hormone (AGH), found in Porcellio scaber (Common rough woodlouse).